The chain runs to 393 residues: Lipid-A-disaccharide synthase (393 aa).

The protein belongs to the LpxB family.

The catalysed reaction is a lipid X + a UDP-2-N,3-O-bis[(3R)-3-hydroxyacyl]-alpha-D-glucosamine = a lipid A disaccharide + UDP + H(+). The protein operates within bacterial outer membrane biogenesis; LPS lipid A biosynthesis. In terms of biological role, condensation of UDP-2,3-diacylglucosamine and 2,3-diacylglucosamine-1-phosphate to form lipid A disaccharide, a precursor of lipid A, a phosphorylated glycolipid that anchors the lipopolysaccharide to the outer membrane of the cell. This chain is Lipid-A-disaccharide synthase, found in Bordetella bronchiseptica (strain ATCC BAA-588 / NCTC 13252 / RB50) (Alcaligenes bronchisepticus).